Consider the following 611-residue polypeptide: MSAPQPGSTDPAVIRNFCIIAHIDHGKSTLADRMLQITGVLDERSARAQYLDRMDIERERGITIKSQAVRMPWEVDGVTHLLNMIDTPGHVDFSYEVSRSLQACEGAILLVDAAQGIEAQTLANLYLALEADLEIIPVLNKIDLPGAESDRHAAEIAGIIGCDESEVLRVSAKTGEGVSDLLDTIVAKVPAPEGVADAPARALIFDSVYDTYRGVVTYVRVVDGALRHREKILMMSTGAAHEVLEIGVISPEMVPAQGLSVGEVGYLITGVKDVRQSRVGDTVTNASKPSEKDLGGYQHPKPMVYSGLFPIDAKDFPDLRDALDKLQLNDAALVYEPETSTALGFGFRVGFLGLLHMEIVRERLEREFDLDLISTAPSVVHHVLMEDGSTVAVTNPSEYPTSGRIAEVREPIVDATILSPAEYIGTILELCQQRRGVQQGLDYLSSDRVEIRYRLPLSEIVFDFFDQLKSRTKGYASLDYHEAGEQAADLVKVDILLNGDPVDALSSIVHRDKSYSYGVAMAAKLKELIPRQQFEVPVQAAIGARVIARETIRAVRKDVLAKCYGGDISRKRKLLEKQKAGKKRMKVVGSVEVPQEAFVAALRTGESTEKK.

The tr-type G domain occupies 12 to 193 (AVIRNFCIIA…TIVAKVPAPE (182 aa)). GTP-binding positions include 24–29 (DHGKST) and 140–143 (NKID).

This sequence belongs to the TRAFAC class translation factor GTPase superfamily. Classic translation factor GTPase family. LepA subfamily.

The protein localises to the cell membrane. It carries out the reaction GTP + H2O = GDP + phosphate + H(+). Its function is as follows. Required for accurate and efficient protein synthesis under certain stress conditions. May act as a fidelity factor of the translation reaction, by catalyzing a one-codon backward translocation of tRNAs on improperly translocated ribosomes. Back-translocation proceeds from a post-translocation (POST) complex to a pre-translocation (PRE) complex, thus giving elongation factor G a second chance to translocate the tRNAs correctly. Binds to ribosomes in a GTP-dependent manner. The polypeptide is Elongation factor 4 (Cutibacterium acnes (strain DSM 16379 / KPA171202) (Propionibacterium acnes)).